Reading from the N-terminus, the 155-residue chain is Deoxyuridine 5'-triphosphate nucleotidohydrolase (155 aa).

Substrate contacts are provided by residues 74–76, Asn87, and 91–93; these read RSG and TID.

It belongs to the dUTPase family. Requires Mg(2+) as cofactor.

The catalysed reaction is dUTP + H2O = dUMP + diphosphate + H(+). The protein operates within pyrimidine metabolism; dUMP biosynthesis; dUMP from dCTP (dUTP route): step 2/2. Functionally, this enzyme is involved in nucleotide metabolism: it produces dUMP, the immediate precursor of thymidine nucleotides and it decreases the intracellular concentration of dUTP so that uracil cannot be incorporated into DNA. The protein is Deoxyuridine 5'-triphosphate nucleotidohydrolase of Dinoroseobacter shibae (strain DSM 16493 / NCIMB 14021 / DFL 12).